A 428-amino-acid chain; its full sequence is Gamma-glutamyl phosphate reductase (428 aa).

The protein belongs to the gamma-glutamyl phosphate reductase family.

It is found in the cytoplasm. It carries out the reaction L-glutamate 5-semialdehyde + phosphate + NADP(+) = L-glutamyl 5-phosphate + NADPH + H(+). It functions in the pathway amino-acid biosynthesis; L-proline biosynthesis; L-glutamate 5-semialdehyde from L-glutamate: step 2/2. Functionally, catalyzes the NADPH-dependent reduction of L-glutamate 5-phosphate into L-glutamate 5-semialdehyde and phosphate. The product spontaneously undergoes cyclization to form 1-pyrroline-5-carboxylate. The chain is Gamma-glutamyl phosphate reductase from Anaeromyxobacter sp. (strain Fw109-5).